A 210-amino-acid polypeptide reads, in one-letter code: MTGLFVTLEGPEGAGKSTNRDYLAERLRERGIEVQLTREPGGTPLAERIRELLLAPGDEPMAADTELLLMFAARAQHIAGVIRPALARGAVVLCDRFTDATYAYQGGGRGLPEVRIAALESFVQGDLRPDLTLVFDLPVEIGLARAAARGRLDRFEQEDRRFFEAVRQTYLQRAAQAPERYQVLDAGLPLTEVQAGLDRLLPNLLERLNG.

Residue 10–17 (GPEGAGKS) coordinates ATP.

The protein belongs to the thymidylate kinase family.

It catalyses the reaction dTMP + ATP = dTDP + ADP. Phosphorylation of dTMP to form dTDP in both de novo and salvage pathways of dTTP synthesis. The protein is Thymidylate kinase of Pseudomonas aeruginosa (strain UCBPP-PA14).